The primary structure comprises 277 residues: Undecaprenyl-diphosphatase (277 aa).

6 helical membrane-spanning segments follow: residues 47–67 (FNIIIQLAAILAVVWEFRGKI), 85–105 (ANLLIAFFPAVVLGVLFADLI), 108–128 (WLFNPITVALALVVGGVVMLW), 183–203 (AATEFSFFLAMPTMVGAAVYS), 218–238 (VFAVGFVTSFVFAMVAVRALL), and 249–269 (FAWYRIAFGLLILATWQFHLI).

It belongs to the UppP family.

Its subcellular location is the cell inner membrane. It catalyses the reaction di-trans,octa-cis-undecaprenyl diphosphate + H2O = di-trans,octa-cis-undecaprenyl phosphate + phosphate + H(+). In terms of biological role, catalyzes the dephosphorylation of undecaprenyl diphosphate (UPP). Confers resistance to bacitracin. The polypeptide is Undecaprenyl-diphosphatase (Pseudomonas aeruginosa (strain UCBPP-PA14)).